A 281-amino-acid polypeptide reads, in one-letter code: tRNA dimethylallyltransferase (281 aa).

2 interaction with substrate tRNA regions span residues 13 to 16 (DSAQ) and 133 to 137 (QRITR).

This sequence belongs to the IPP transferase family. Monomer. The cofactor is Mg(2+).

The catalysed reaction is adenosine(37) in tRNA + dimethylallyl diphosphate = N(6)-dimethylallyladenosine(37) in tRNA + diphosphate. Catalyzes the transfer of a dimethylallyl group onto the adenine at position 37 in tRNAs that read codons beginning with uridine, leading to the formation of N6-(dimethylallyl)adenosine (i(6)A). The polypeptide is tRNA dimethylallyltransferase (Novosphingobium aromaticivorans (strain ATCC 700278 / DSM 12444 / CCUG 56034 / CIP 105152 / NBRC 16084 / F199)).